A 139-amino-acid polypeptide reads, in one-letter code: Large ribosomal subunit protein bL17 (139 aa).

Belongs to the bacterial ribosomal protein bL17 family. In terms of assembly, part of the 50S ribosomal subunit. Contacts protein L32.

The chain is Large ribosomal subunit protein bL17 from Cereibacter sphaeroides (strain ATCC 17029 / ATH 2.4.9) (Rhodobacter sphaeroides).